The following is a 432-amino-acid chain: Cyclic GMP-AMP synthase (432 aa).

GTP is bound at residue 110–115 (QGSFQY). Mg(2+)-binding residues include Asp-129 and Asp-131. Arg-180 serves as a coordination point for ATP. Asp-191 is a binding site for Mg(2+). Ser-255 is an ATP binding site. Lys-283, Ser-297, and Asp-344 together coordinate GTP. The segment at 413 to 432 (LNAPSKEPSSKPINKTMVSG) is disordered. Over residues 423 to 432 (KPINKTMVSG) the composition is skewed to polar residues.

This sequence belongs to the CD-NTase family. A01 subfamily. Requires Mg(2+) as cofactor.

The catalysed reaction is GTP + ATP = 3',3'-cGAMP + 2 diphosphate. Functionally, cyclic nucleotide synthase (second messenger synthase) of a CBASS antivirus system. CBASS (cyclic oligonucleotide-based antiphage signaling system) provides immunity against bacteriophage. The CD-NTase protein synthesizes cyclic nucleotides in response to infection; these serve as specific second messenger signals. The signals activate a diverse range of effectors, leading to bacterial cell death and thus abortive phage infection. A type II-C(GA) CBASS system. Catalyzes the synthesis of 3'3'-cyclic GMP-AMP (3'3'-cGAMP) from GTP and ATP, a second messenger in cell signal transduction. Is also able to produce c-di-AMP and c-di-GMP from ATP and GTP, respectively; however, 3'3'-cGAMP is the dominant molecule produced by DncV in vivo, contrary to the 2'3'-cGAMP produced by eukaryotes. By producing cGAMP, down-regulates csgD expression and expression of flagellum regulon genes, which leads to the down-regulation of rdar biofilm formation and flagellum-mediated swimming and swarming motility in a temperature-dependent manner. Controls the activity of cGAMP-activated phospholipase CapV, a patatin-like lipase that is a direct 3',3'-cGAMP receptor encoded in the dncV operon. This chain is Cyclic GMP-AMP synthase, found in Escherichia coli.